A 427-amino-acid polypeptide reads, in one-letter code: Probable threonylcarbamoyladenosine tRNA methylthiotransferase (427 aa).

The region spanning 12–118 (MRVYVEGYGC…AGEILKNYVE (107 aa)) is the MTTase N-terminal domain. Cysteine 21, cysteine 57, cysteine 86, cysteine 155, cysteine 159, and cysteine 162 together coordinate [4Fe-4S] cluster. Positions 141–370 (LKPSLITPLP…DKLRRELSYL (230 aa)) constitute a Radical SAM core domain. The 55-residue stretch at 373–427 (KKYIGKAMKVLVLDEGKGYTDNFKVVKFEGGEVGEFRKVKITDAKTFGLKGELIL) folds into the TRAM domain.

Belongs to the methylthiotransferase family. CDKAL1 subfamily. [4Fe-4S] cluster serves as cofactor.

The enzyme catalyses N(6)-L-threonylcarbamoyladenosine(37) in tRNA + (sulfur carrier)-SH + AH2 + 2 S-adenosyl-L-methionine = 2-methylsulfanyl-N(6)-L-threonylcarbamoyladenosine(37) in tRNA + (sulfur carrier)-H + 5'-deoxyadenosine + L-methionine + A + S-adenosyl-L-homocysteine + 2 H(+). Catalyzes the methylthiolation of N6-threonylcarbamoyladenosine (t(6)A), leading to the formation of 2-methylthio-N6-threonylcarbamoyladenosine (ms(2)t(6)A) at position 37 in tRNAs that read codons beginning with adenine. The chain is Probable threonylcarbamoyladenosine tRNA methylthiotransferase from Methanocaldococcus jannaschii (strain ATCC 43067 / DSM 2661 / JAL-1 / JCM 10045 / NBRC 100440) (Methanococcus jannaschii).